The chain runs to 159 residues: Phosphopantetheine adenylyltransferase (159 aa).

Thr10 serves as a coordination point for substrate. ATP-binding positions include 10 to 11 (TF) and His18. Residues Lys42, Met74, and Arg88 each contribute to the substrate site. Residues 89–91 (GLR), Glu99, and 124–130 (WSFISSS) each bind ATP.

The protein belongs to the bacterial CoaD family. Homohexamer. It depends on Mg(2+) as a cofactor.

The protein resides in the cytoplasm. It catalyses the reaction (R)-4'-phosphopantetheine + ATP + H(+) = 3'-dephospho-CoA + diphosphate. It participates in cofactor biosynthesis; coenzyme A biosynthesis; CoA from (R)-pantothenate: step 4/5. Its function is as follows. Reversibly transfers an adenylyl group from ATP to 4'-phosphopantetheine, yielding dephospho-CoA (dPCoA) and pyrophosphate. This chain is Phosphopantetheine adenylyltransferase, found in Yersinia pestis.